The chain runs to 224 residues: UPF0758 protein lmo1549 (224 aa).

In terms of domain architecture, MPN spans V102–F224. 3 residues coordinate Zn(2+): H173, H175, and D186. The JAMM motif signature appears at H173–D186.

The protein belongs to the UPF0758 family.

The protein is UPF0758 protein lmo1549 of Listeria monocytogenes serovar 1/2a (strain ATCC BAA-679 / EGD-e).